A 252-amino-acid polypeptide reads, in one-letter code: 2-C-methyl-D-erythritol 4-phosphate cytidylyltransferase (252 aa).

It belongs to the IspD/TarI cytidylyltransferase family. IspD subfamily.

The catalysed reaction is 2-C-methyl-D-erythritol 4-phosphate + CTP + H(+) = 4-CDP-2-C-methyl-D-erythritol + diphosphate. The protein operates within isoprenoid biosynthesis; isopentenyl diphosphate biosynthesis via DXP pathway; isopentenyl diphosphate from 1-deoxy-D-xylulose 5-phosphate: step 2/6. Catalyzes the formation of 4-diphosphocytidyl-2-C-methyl-D-erythritol from CTP and 2-C-methyl-D-erythritol 4-phosphate (MEP). This chain is 2-C-methyl-D-erythritol 4-phosphate cytidylyltransferase, found in Chlorobium phaeobacteroides (strain BS1).